Consider the following 566-residue polypeptide: Putative lipase ATG15 (566 aa).

Topologically, residues 1 to 17 (MGSKHKKNASKSLRAFS) are cytoplasmic. The chain crosses the membrane as a helical; Signal-anchor for type II membrane protein span at residues 18–38 (FIILSASIALVYIFNPVKLIF). Topologically, residues 39 to 566 (PSSIIRFHHG…CVEWGDEEDA (528 aa)) are lumenal. 2 N-linked (GlcNAc...) asparagine glycosylation sites follow: asparagine 264 and asparagine 348. Serine 366 acts as the Charge relay system in catalysis. Asparagine 483 carries N-linked (GlcNAc...) asparagine glycosylation. A disordered region spans residues 507-545 (DSLDDEPPLPNPLRPGKPSTTSSSQHHTSTTTTTETSRP). Over residues 522–543 (GKPSTTSSSQHHTSTTTTTETS) the composition is skewed to low complexity.

It belongs to the AB hydrolase superfamily. Lipase family. In terms of assembly, binds to both phosphatidylinositol (PI) and phosphatidylinositol 3,5-bisphosphate (PIP2).

It is found in the endosome. It localises to the multivesicular body membrane. Its subcellular location is the prevacuolar compartment membrane. It carries out the reaction a triacylglycerol + H2O = a diacylglycerol + a fatty acid + H(+). In terms of biological role, lipase which is essential for lysis of subvacuolar cytoplasm to vacuole targeted bodies and intravacuolar autophagic bodies. Involved in the lysis of intravacuolar multivesicular body (MVB) vesicles. The intravacuolar membrane disintegration by ATG15 is critical to life span extension. In Meyerozyma guilliermondii (strain ATCC 6260 / CBS 566 / DSM 6381 / JCM 1539 / NBRC 10279 / NRRL Y-324) (Yeast), this protein is Putative lipase ATG15 (ATG15).